Here is a 397-residue protein sequence, read N- to C-terminus: MPRPGQPRPSSGPPRLGPWERPTELCLETNDERSQPPPGRRTRRPDPKDPGHHGPESITFISGSAEPANEPPTCCLLWRPWGWDWCRAAFCFRRCRDCLQRCGACVRSCSPCLSAGDPIEGSSEAAWAKEHNGVPPSPDRAPPSRRDGQKLKTSMGSSFSYPDVKLKGIPVYPYRHATSPVPDADSCCKEPLADPPPTRHSLPSTFTSSPRGSEEYYSFHESDLDLPEMGSGSMSSREIDVLIFKKLTELFSVHQIDELAKCTSDTVFLEKTSKISDLISSITQDYHLDEQDAEGRLVRGIIRISTRKSRSRPQTSEGRSARSTAPAAAPDSGHETMVGSGLSQDELTVQISQETTADAIARKLRPYGAPGYPASQDSSFQGTDTDSSGAPLLQVYC.

Residues 1-16 (MPRPGQPRPSSGPPRL) show a composition bias toward pro residues. 3 disordered regions span residues 1-67 (MPRP…SAEP), 124-158 (EAAW…MGSS), and 191-214 (PLAD…RGSE). The segment covering 44-55 (RPDPKDPGHHGP) has biased composition (basic and acidic residues). The segment covering 201 to 211 (SLPSTFTSSPR) has biased composition (polar residues). At S218 the chain carries Phosphoserine. 2 disordered regions span residues 304–339 (ISTR…TMVG) and 361–392 (ARKL…GAPL). Low complexity predominate over residues 321–330 (ARSTAPAAAP). Positions 375–388 (SQDSSFQGTDTDSS) are enriched in polar residues.

It is found in the cytoplasm. It localises to the cell junction. In terms of biological role, plays a role in the regulation of the epidermis formation during early development. Required both as an inhibitor of basal cell proliferation and a promoter of differentiation of basal progenitor cell progeny. The chain is Keratinocyte differentiation factor 1 (Kdf1) from Rattus norvegicus (Rat).